Consider the following 311-residue polypeptide: tRNA-cytidine(32) 2-sulfurtransferase (311 aa).

The PP-loop motif motif lies at 47–52 (SGGKDS). [4Fe-4S] cluster-binding residues include cysteine 122, cysteine 125, and cysteine 213.

This sequence belongs to the TtcA family. As to quaternary structure, homodimer. The cofactor is Mg(2+). It depends on [4Fe-4S] cluster as a cofactor.

It is found in the cytoplasm. It catalyses the reaction cytidine(32) in tRNA + S-sulfanyl-L-cysteinyl-[cysteine desulfurase] + AH2 + ATP = 2-thiocytidine(32) in tRNA + L-cysteinyl-[cysteine desulfurase] + A + AMP + diphosphate + H(+). It participates in tRNA modification. In terms of biological role, catalyzes the ATP-dependent 2-thiolation of cytidine in position 32 of tRNA, to form 2-thiocytidine (s(2)C32). The sulfur atoms are provided by the cysteine/cysteine desulfurase (IscS) system. The sequence is that of tRNA-cytidine(32) 2-sulfurtransferase from Salmonella paratyphi B (strain ATCC BAA-1250 / SPB7).